Consider the following 734-residue polypeptide: 1,4-alpha-glucan branching enzyme GlgB (734 aa).

The Nucleophile role is filled by D413. E466 functions as the Proton donor in the catalytic mechanism.

It belongs to the glycosyl hydrolase 13 family. GlgB subfamily. As to quaternary structure, monomer.

The enzyme catalyses Transfers a segment of a (1-&gt;4)-alpha-D-glucan chain to a primary hydroxy group in a similar glucan chain.. It functions in the pathway glycan biosynthesis; glycogen biosynthesis. Its function is as follows. Catalyzes the formation of the alpha-1,6-glucosidic linkages in glycogen by scission of a 1,4-alpha-linked oligosaccharide from growing alpha-1,4-glucan chains and the subsequent attachment of the oligosaccharide to the alpha-1,6 position. This is 1,4-alpha-glucan branching enzyme GlgB from Nitrosomonas europaea (strain ATCC 19718 / CIP 103999 / KCTC 2705 / NBRC 14298).